We begin with the raw amino-acid sequence, 282 residues long: Protoheme IX farnesyltransferase (282 aa).

8 consecutive transmembrane segments (helical) span residues leucine 40–valine 60, alanine 87–proline 107, tyrosine 108–leucine 128, serine 135–glycine 157, glycine 162–tyrosine 184, alanine 204–phenylalanine 224, leucine 228–leucine 248, and alanine 261–leucine 281.

The protein belongs to the UbiA prenyltransferase family. Protoheme IX farnesyltransferase subfamily.

Its subcellular location is the cell membrane. It catalyses the reaction heme b + (2E,6E)-farnesyl diphosphate + H2O = Fe(II)-heme o + diphosphate. Its pathway is porphyrin-containing compound metabolism; heme O biosynthesis; heme O from protoheme: step 1/1. In terms of biological role, converts heme B (protoheme IX) to heme O by substitution of the vinyl group on carbon 2 of heme B porphyrin ring with a hydroxyethyl farnesyl side group. This is Protoheme IX farnesyltransferase from Thermofilum pendens (strain DSM 2475 / Hrk 5).